The chain runs to 538 residues: Bifunctional purine biosynthesis protein PurH (538 aa).

Residues 8-158 (IPAPDKVQVK…KNHAYVTTLT (151 aa)) form the MGS-like domain.

The protein belongs to the PurH family.

It catalyses the reaction (6R)-10-formyltetrahydrofolate + 5-amino-1-(5-phospho-beta-D-ribosyl)imidazole-4-carboxamide = 5-formamido-1-(5-phospho-D-ribosyl)imidazole-4-carboxamide + (6S)-5,6,7,8-tetrahydrofolate. It carries out the reaction IMP + H2O = 5-formamido-1-(5-phospho-D-ribosyl)imidazole-4-carboxamide. The protein operates within purine metabolism; IMP biosynthesis via de novo pathway; 5-formamido-1-(5-phospho-D-ribosyl)imidazole-4-carboxamide from 5-amino-1-(5-phospho-D-ribosyl)imidazole-4-carboxamide (10-formyl THF route): step 1/1. Its pathway is purine metabolism; IMP biosynthesis via de novo pathway; IMP from 5-formamido-1-(5-phospho-D-ribosyl)imidazole-4-carboxamide: step 1/1. The polypeptide is Bifunctional purine biosynthesis protein PurH (Rhizobium rhizogenes (strain K84 / ATCC BAA-868) (Agrobacterium radiobacter)).